Here is a 346-residue protein sequence, read N- to C-terminus: uncharacterized protein (346 aa).

The next 8 helical transmembrane spans lie at 15–35 (YLRGFALLGIILVNILGLLTV), 55–75 (VEARFYPIFSFLFGVGFYLFI), 93–113 (ILVLFIFGFIHFLFQPGEALT), 139–159 (ILLLFVSIFAAKIFMPLPLIL), 182–202 (IFTFFMFILSVGGLLLQYCYV), 229–249 (LGVATGPILSAFYAGFLLLLL), 269–289 (LTNYISQTALILLAGKLFHLF), and 295–315 (LQSLWLCLAIYVIQLIFSAMW).

This sequence to E.coli YeiB, B.subtilis YxaH and B.subtilis YrkO.

Its subcellular location is the cell membrane. Its function is as follows. Involved in transport. This is an uncharacterized protein from Bacillus acidopullulyticus.